The primary structure comprises 332 residues: Mitochondrial glycine transporter (332 aa).

Solcar repeat units lie at residues 11-94 (SSSY…LRQN), 121-205 (LSNL…LKKR), and 235-319 (TSAS…LIRR). 6 helical membrane-spanning segments follow: residues 17–42 (FGAG…TRVQ), 69–95 (GTVP…RQNV), 127–152 (LTTG…VRYE), 180–203 (GFGA…EELK), 239–265 (INFG…KTRI), and 294–312 (GLGL…AWTI).

Belongs to the mitochondrial carrier (TC 2.A.29) family. SLC25A38 subfamily.

It is found in the mitochondrion inner membrane. It catalyses the reaction glycine(in) = glycine(out). Its function is as follows. Mitochondrial glycine transporter that imports glycine into the mitochondrial matrix. Plays an important role in providing glycine for the first enzymatic step in heme biosynthesis, the condensation of glycine with succinyl-CoA to produce 5-aminolevulinate (ALA) in the mitochondrial matrix. The protein is Mitochondrial glycine transporter of Botryotinia fuckeliana (strain B05.10) (Noble rot fungus).